We begin with the raw amino-acid sequence, 279 residues long: HTH-type transcriptional activator RhaS (279 aa).

The region spanning 175 to 273 (QALLGWLQNN…SQAPKSLRHQ (99 aa)) is the HTH araC/xylS-type domain. 2 consecutive DNA-binding regions (H-T-H motif) follow at residues 192 to 213 (GSLA…KQHT) and 240 to 263 (ITTI…RKAF).

In terms of assembly, binds DNA as a dimer.

The protein resides in the cytoplasm. Its function is as follows. Activates expression of the rhaBAD and rhaT operons. The chain is HTH-type transcriptional activator RhaS from Pectobacterium carotovorum subsp. carotovorum (strain PC1).